A 129-amino-acid chain; its full sequence is Small ribosomal subunit protein uS8 (129 aa).

This sequence belongs to the universal ribosomal protein uS8 family. As to quaternary structure, part of the 30S ribosomal subunit.

One of the primary rRNA binding proteins, it binds directly to 16S rRNA central domain where it helps coordinate assembly of the platform of the 30S subunit. This is Small ribosomal subunit protein uS8 from Archaeoglobus fulgidus (strain ATCC 49558 / DSM 4304 / JCM 9628 / NBRC 100126 / VC-16).